The chain runs to 779 residues: Phosphoribosylformylglycinamidine synthase subunit PurL (779 aa).

The active site involves H52. Y55 and K94 together coordinate ATP. E96 contacts Mg(2+). Residues 97-100 and R119 contribute to the substrate site; that span reads SHNH. Residue H98 is the Proton acceptor of the active site. Mg(2+) is bound at residue D120. Q243 serves as a coordination point for substrate. D271 serves as a coordination point for Mg(2+). Residue 315 to 317 participates in substrate binding; that stretch reads ESQ. ATP contacts are provided by N523 and G560. Residue N561 coordinates Mg(2+). S563 contributes to the substrate binding site.

It belongs to the FGAMS family. In terms of assembly, monomer. Part of the FGAM synthase complex composed of 1 PurL, 1 PurQ and 2 PurS subunits.

It is found in the cytoplasm. It carries out the reaction N(2)-formyl-N(1)-(5-phospho-beta-D-ribosyl)glycinamide + L-glutamine + ATP + H2O = 2-formamido-N(1)-(5-O-phospho-beta-D-ribosyl)acetamidine + L-glutamate + ADP + phosphate + H(+). The protein operates within purine metabolism; IMP biosynthesis via de novo pathway; 5-amino-1-(5-phospho-D-ribosyl)imidazole from N(2)-formyl-N(1)-(5-phospho-D-ribosyl)glycinamide: step 1/2. Its function is as follows. Part of the phosphoribosylformylglycinamidine synthase complex involved in the purines biosynthetic pathway. Catalyzes the ATP-dependent conversion of formylglycinamide ribonucleotide (FGAR) and glutamine to yield formylglycinamidine ribonucleotide (FGAM) and glutamate. The FGAM synthase complex is composed of three subunits. PurQ produces an ammonia molecule by converting glutamine to glutamate. PurL transfers the ammonia molecule to FGAR to form FGAM in an ATP-dependent manner. PurS interacts with PurQ and PurL and is thought to assist in the transfer of the ammonia molecule from PurQ to PurL. The protein is Phosphoribosylformylglycinamidine synthase subunit PurL of Prochlorococcus marinus (strain MIT 9515).